The chain runs to 323 residues: Ribose-phosphate pyrophosphokinase (323 aa).

ATP-binding positions include 38–40 and 96–97; these read DGE and RQ. Mg(2+) is bound by residues His-130 and Asp-170. Residue Lys-193 is part of the active site. Residues Arg-195, Asp-219, and 223 to 227 contribute to the D-ribose 5-phosphate site; that span reads DTAGT.

The protein belongs to the ribose-phosphate pyrophosphokinase family. Class I subfamily. Homohexamer. Mg(2+) is required as a cofactor.

The protein localises to the cytoplasm. The enzyme catalyses D-ribose 5-phosphate + ATP = 5-phospho-alpha-D-ribose 1-diphosphate + AMP + H(+). The protein operates within metabolic intermediate biosynthesis; 5-phospho-alpha-D-ribose 1-diphosphate biosynthesis; 5-phospho-alpha-D-ribose 1-diphosphate from D-ribose 5-phosphate (route I): step 1/1. Its function is as follows. Involved in the biosynthesis of the central metabolite phospho-alpha-D-ribosyl-1-pyrophosphate (PRPP) via the transfer of pyrophosphoryl group from ATP to 1-hydroxyl of ribose-5-phosphate (Rib-5-P). In Chlorobaculum tepidum (strain ATCC 49652 / DSM 12025 / NBRC 103806 / TLS) (Chlorobium tepidum), this protein is Ribose-phosphate pyrophosphokinase.